Reading from the N-terminus, the 63-residue chain is Cytotoxin homolog S3C2 (63 aa).

Disulfide bonds link Cys-3-Cys-22, Cys-15-Cys-40, Cys-44-Cys-55, and Cys-56-Cys-61.

Belongs to the three-finger toxin family. Short-chain subfamily. Orphan group XVI sub-subfamily. As to expression, expressed by the venom gland.

It is found in the secreted. The protein is Cytotoxin homolog S3C2 of Aspidelaps scutatus (Shield-nose snake).